Consider the following 372-residue polypeptide: Pyrimidine monooxygenase RutA (372 aa).

Residues 57-58 (IK), N123, E132, 148-149 (RY), and S198 each bind FMN.

This sequence belongs to the NtaA/SnaA/DszA monooxygenase family. RutA subfamily.

The enzyme catalyses uracil + FMNH2 + NADH + O2 = (Z)-3-ureidoacrylate + FMN + NAD(+) + H2O + H(+). It carries out the reaction thymine + FMNH2 + NADH + O2 = (Z)-2-methylureidoacrylate + FMN + NAD(+) + H2O + H(+). Functionally, catalyzes the pyrimidine ring opening between N-3 and C-4 by an unusual flavin hydroperoxide-catalyzed mechanism, adding oxygen atoms in the process to yield ureidoacrylate peracid, that immediately reacts with FMN forming ureidoacrylate and FMN-N(5)-oxide. The FMN-N(5)-oxide reacts spontaneously with NADH to produce FMN. Requires the flavin reductase RutF to regenerate FMN in vivo. The sequence is that of Pyrimidine monooxygenase RutA from Methylorubrum extorquens (strain PA1) (Methylobacterium extorquens).